We begin with the raw amino-acid sequence, 149 residues long: MADQLTEEQIAEFKEAFSLFDKDGDGTITTKELGTVMRSLGQNPTEAELQDMINEVDADGDGTIDFPEFLTMMARKMKDTDSEEEIREAFRVFDKDGDGFISAAELRHVMTNLGEKLTDEEVDEMIREADIDGDGQVNYEEFVKMMTSK.

Ala2 carries the post-translational modification N-acetylalanine. EF-hand domains are found at residues 8-43, 44-79, 81-116, and 117-149; these read EQIAEFKEAFSLFDKDGDGTITTKELGTVMRSLGQN, PTEAELQDMINEVDADGDGTIDFPEFLTMMARKMKD, DSEEEIREAFRVFDKDGDGFISAAELRHVMTNLGEK, and LTDEEVDEMIREADIDGDGQVNYEEFVKMMTSK. Residues Asp21, Asp23, Asp25, Thr27, Glu32, Asp57, Asp59, Asp61, Thr63, Glu68, Asp94, Asp96, Asp98, and Glu105 each contribute to the Ca(2+) site. An N6,N6,N6-trimethyllysine modification is found at Lys116. Ca(2+) is bound by residues Asp130, Asp132, Asp134, Gln136, and Glu141.

This sequence belongs to the calmodulin family.

Functionally, calmodulin mediates the control of a large number of enzymes, ion channels and other proteins by Ca(2+). Among the enzymes to be stimulated by the calmodulin-Ca(2+) complex are a number of protein kinases and phosphatases. The protein is Calmodulin of Renilla reniformis (Sea pansy).